Consider the following 193-residue polypeptide: Inner membrane protein p54 (193 aa).

A helical transmembrane segment spans residues 32–52 (YTILIAIVVLVIIIIVLIYLF). The interval 84-126 (PQPGTSKPAGATTASVGKPVTGRPATNRPVTDRPATNNPVTDR) is disordered. Repeat copies occupy residues 135–138 (AAAS), 139–142 (AAAS), 143–146 (AAAS), and 147–150 (AAAS). The 4 X 4 AA tandem repeats of A-A-A-S stretch occupies residues 135-150 (AAASAAASAAASAAAS). Positions 159–171 (YTTVTTQNTASQT) are interaction with host DYNLL1.

Belongs to the asfivirus envelope protein p54 family. As to quaternary structure, interacts with the host light chain cytoplasmic dynein DYNLL1; this interaction is critical for intracellular microtubule-dependent virus transport toward viral factories.

It localises to the virion membrane. The protein localises to the host cytoplasm. The protein resides in the host cytoskeleton. It is found in the host endoplasmic reticulum membrane. Its function is as follows. Inner envelope protein involved, through its interaction with host dynein, in the intracellular microtubule-dependent transport of viral capsid toward viral factories. Seems to induce caspase-3 activation and apoptosis. Plays a role in virion morphogenesis by recruiting and transforming the host ER membranes into the precursors of the viral envelope. Involved in virus attachment to the host cell. The protein is Inner membrane protein p54 of Ornithodoros (relapsing fever ticks).